The primary structure comprises 1994 residues: Protein-methionine sulfoxide oxidase mical3a (1994 aa).

The segment at 2 to 498 (GDGGVNAVGE…RHLLDTGETR (497 aa)) is monooxygenase domain. Residues Cys101, 101–129 (CGLR…SRNN), Glu120, Arg122, Arg127, Asn129, and Asp402 contribute to the FAD site. The 107-residue stretch at 521 to 627 (IVRSSKLLNW…YLSQFYEMFK (107 aa)) folds into the Calponin-homology (CH) domain. Positions 666 to 708 (ISRKRNPKDKKEKELDGLGKRRKTSQAGQSEDEELQRANRDDR) are disordered. Residues 674 to 684 (DKKEKELDGLG) show a composition bias toward basic and acidic residues. The 63-residue stretch at 772–834 (DVCFFCRKRV…KPHYCYRLSG (63 aa)) folds into the LIM zinc-binding domain. Disordered regions lie at residues 843 to 900 (PAAA…LKGT), 917 to 1064 (EELE…AEAR), 1176 to 1263 (SQPV…ELKK), 1281 to 1476 (LGLT…REEV), 1493 to 1555 (VEDT…SPEA), and 1598 to 1747 (KVAW…LRLR). 2 stretches are compositionally biased toward acidic residues: residues 917–926 (EELEEVPEET) and 951–961 (SDMEEEDEDAE). The segment covering 975–987 (EAVELHAKLKGES) has biased composition (basic and acidic residues). 2 stretches are compositionally biased toward acidic residues: residues 1001–1037 (GEMD…DPEA) and 1046–1060 (PGTE…SDAE). Residues 1200–1215 (PTGNPLSPICTQSQPC) show a composition bias toward polar residues. Composition is skewed to basic and acidic residues over residues 1249 to 1263 (RTNE…ELKK) and 1287 to 1297 (ERSKTAVEKSI). 2 stretches are compositionally biased toward low complexity: residues 1299-1314 (KTPT…YTPE) and 1358-1368 (SSSSGLGLNGS). Positions 1369 to 1389 (VTTSQTAASDSYNNSDSTMLT) are enriched in polar residues. A compositionally biased stretch (pro residues) spans 1437-1458 (PVSPPQPKQKPVTAPVPTPRTN). The segment covering 1464 to 1476 (RVKEPNKPRREEV) has biased composition (basic and acidic residues). Residues 1616-1635 (AQKDSAVKALESKKQADTLP) show a composition bias toward basic and acidic residues. Positions 1649-1660 (SSVTSSESSTGG) are enriched in low complexity. Over residues 1661–1679 (KSKKRSSLFSPRKNKKEKK) the composition is skewed to basic residues. Basic and acidic residues predominate over residues 1680 to 1693 (AKNERLSSTEETPP). Over residues 1718-1729 (CPSTPSSSTTGD) the composition is skewed to low complexity. Residues 1730–1746 (SGKKKDSPLDRSSDLRL) are compositionally biased toward basic and acidic residues. 2 coiled-coil regions span residues 1796–1855 (EEEL…KALR) and 1894–1960 (QEKN…EQRD). One can recognise a bMERB domain in the interval 1816–1982 (KQEELKRLHR…EKEEDKDLEA (167 aa)).

The protein belongs to the Mical family. FAD serves as cofactor.

It is found in the cytoplasm. Its subcellular location is the cytoskeleton. The protein localises to the nucleus. The catalysed reaction is L-methionyl-[F-actin] + NADPH + O2 + H(+) = L-methionyl-(R)-S-oxide-[F-actin] + NADP(+) + H2O. In terms of biological role, monooxygenase that promotes depolymerization of F-actin by mediating oxidation of specific methionine residues on actin. Acts by modifying actin subunits through the addition of oxygen to form methionine-sulfoxide, leading to promote actin filament severing and prevent repolymerization. Involved in exocytic vesicles tethering and fusion: the monooxygenase activity is required for this process. The sequence is that of Protein-methionine sulfoxide oxidase mical3a (mical3a) from Danio rerio (Zebrafish).